We begin with the raw amino-acid sequence, 180 residues long: Non-specific lipid transfer protein GPI-anchored 3 (180 aa).

The N-terminal stretch at 1–22 (MEAVRFAVAVVLVFCYVTSSNA) is a signal peptide. 4 disulfide bridges follow: Cys41–Cys78, Cys48–Cys62, Cys63–Cys104, and Cys76–Cys113. N-linked (GlcNAc...) asparagine glycosylation is found at Asn91 and Asn120. Composition is skewed to low complexity over residues 116–125 (SAGTNSSSTP) and 133–156 (PASSTSTGTGSGSTGNAAPSTAKP). The tract at residues 116–156 (SAGTNSSSTPPATPKTPPASSTSTGTGSGSTGNAAPSTAKP) is disordered. The GPI-anchor amidated serine moiety is linked to residue Ser158. Residues 159–180 (SAPAINFGGLSFASAVVATLFF) constitute a propeptide, removed in mature form.

The protein belongs to the plant LTP family. As to expression, restricted to stamen, pollen and sporophytic tissues. Also detected, at low levels, in stems and leaves.

It is found in the cell membrane. Functionally, lipid transfer protein involved in seed and ovule maturation and development, probably by regulating the fatty acids homeostasis during suberin and sporopollenin biosynthesis or deposition. In Arabidopsis thaliana (Mouse-ear cress), this protein is Non-specific lipid transfer protein GPI-anchored 3.